The chain runs to 302 residues: Pseudouridine-5'-phosphate glycosidase (302 aa).

E25 serves as the catalytic Proton donor. Residues K86 and V106 each contribute to the substrate site. Residue D138 participates in Mn(2+) binding. Position 140-142 (140-142 (SAD)) interacts with substrate. K159 (nucleophile) is an active-site residue.

This sequence belongs to the pseudouridine-5'-phosphate glycosidase family. As to quaternary structure, homotrimer. Mn(2+) is required as a cofactor.

The enzyme catalyses D-ribose 5-phosphate + uracil = psi-UMP + H2O. Its function is as follows. Catalyzes the reversible cleavage of pseudouridine 5'-phosphate (PsiMP) to ribose 5-phosphate and uracil. Functions biologically in the cleavage direction, as part of a pseudouridine degradation pathway. This chain is Pseudouridine-5'-phosphate glycosidase, found in Glaesserella parasuis serovar 5 (strain SH0165) (Haemophilus parasuis).